The sequence spans 879 residues: DNA double-strand break repair Rad50 ATPase (879 aa).

Residues 32 to 38 (NGAGKSS) and Q139 contribute to the ATP site. 2 coiled-coil regions span residues 184 to 304 (IELQ…NKIK) and 342 to 436 (EIKG…NQVK). One can recognise a Zinc-hook domain in the interval 394-492 (LQKLNEDLNN…LISELNQIIN (99 aa)). C440 and C443 together coordinate Zn(2+). Residues 502-722 (IRNLADYNNL…LITAYDKLKK (221 aa)) are a coiled coil. An ATP-binding site is contributed by 786 to 791 (LLSGGE).

This sequence belongs to the SMC family. RAD50 subfamily. As to quaternary structure, homodimer. Forms a heterotetramer composed of two Mre11 subunits and two Rad50 subunits. Requires Zn(2+) as cofactor.

Functionally, part of the Rad50/Mre11 complex, which is involved in the early steps of DNA double-strand break (DSB) repair. The complex may facilitate opening of the processed DNA ends to aid in the recruitment of HerA and NurA. Rad50 controls the balance between DNA end bridging and DNA resection via ATP-dependent structural rearrangements of the Rad50/Mre11 complex. The sequence is that of DNA double-strand break repair Rad50 ATPase from Sulfurisphaera tokodaii (strain DSM 16993 / JCM 10545 / NBRC 100140 / 7) (Sulfolobus tokodaii).